A 60-amino-acid polypeptide reads, in one-letter code: Small ribosomal subunit protein eS31 (60 aa).

4 residues coordinate Zn(2+): Cys-27, Cys-30, Cys-45, and Cys-48. Residues 27-48 (CPRCGPGVFMAEHLNRYACGKC) form a C4-type zinc finger.

This sequence belongs to the eukaryotic ribosomal protein eS31 family. In terms of assembly, part of the 30S ribosomal subunit. Zn(2+) serves as cofactor.

The chain is Small ribosomal subunit protein eS31 from Methanocaldococcus jannaschii (strain ATCC 43067 / DSM 2661 / JAL-1 / JCM 10045 / NBRC 100440) (Methanococcus jannaschii).